Here is a 76-residue protein sequence, read N- to C-terminus: Large ribosomal subunit protein uL29 (76 aa).

Belongs to the universal ribosomal protein uL29 family.

This chain is Large ribosomal subunit protein uL29, found in Gloeothece citriformis (strain PCC 7424) (Cyanothece sp. (strain PCC 7424)).